Consider the following 558-residue polypeptide: MFLDFMSEVEGILKEGLDRCGLSVPLENSLDLSPHADLSTTIAFRLSPVLRKDPKDVAAEIYNSMGSPSRWVDRAELVGPYINFYMSRNFLDNVVTKAQGEDAWWGRRSGSVVVEHTSANPDGPLHVGHIRNSVIGDTIVRILRRAGYNVEAQYYVNDMGRQTAMVVWGCDHLDLDDSKPDHAIARVYIAAHKIMNEKPELSAEVDELMRRYESRDPEIVKKFQRAARYAISGIERTLHRMNIHHDSYKWESEFVWDGSVDEILEMLERTGRTVLKDGALQLDLSEEGFEKSLVLRRADGTTLYTTRDLAYHKWKAENYERVVEVLGADHKLISAQLRTALRMLGIGEPEVVIFEFVSLPDGSMSTRRGKFISADELLDEVEKQAYLEVTKRRPEMDEEFRRDVAGKVAVGAVRYDIVRVSADKATTFDWKTALDFEKLSAPFIQYSHARACSIINKAGELDEFDPGLLRDDYEIALIKKIAEFDLVIERAARELKPHQLATYARELAERFNLFYRYDPVLDAKPVELRNARLGLVRASRNALSATLDTLGIDAPESM.

Residues 119–129 (ANPDGPLHVGH) carry the 'HIGH' region motif.

It belongs to the class-I aminoacyl-tRNA synthetase family.

The protein resides in the cytoplasm. It catalyses the reaction tRNA(Arg) + L-arginine + ATP = L-arginyl-tRNA(Arg) + AMP + diphosphate. This is Arginine--tRNA ligase from Methanothrix thermoacetophila (strain DSM 6194 / JCM 14653 / NBRC 101360 / PT) (Methanosaeta thermophila).